Consider the following 174-residue polypeptide: Acetolactate synthase small subunit (174 aa).

Residues 4-78 form the ACT domain; it reads TLSVLVQDEA…NILNVQDVTN (75 aa).

Belongs to the acetolactate synthase small subunit family. Dimer of large and small chains.

It localises to the plastid. The protein resides in the chloroplast. The enzyme catalyses 2 pyruvate + H(+) = (2S)-2-acetolactate + CO2. The protein operates within amino-acid biosynthesis; L-isoleucine biosynthesis; L-isoleucine from 2-oxobutanoate: step 1/4. It participates in amino-acid biosynthesis; L-valine biosynthesis; L-valine from pyruvate: step 1/4. This Pyropia yezoensis (Susabi-nori) protein is Acetolactate synthase small subunit (ilvH).